We begin with the raw amino-acid sequence, 707 residues long: Choline transporter-like protein 4 (707 aa).

Topologically, residues 1–32 (MGKKQKENEAYGNSAKYDPSFRGPIKNRGCTD) are cytoplasmic. The chain crosses the membrane as a helical span at residues 33-53 (IICCVLFLVFILGYIVVGLVA). At 54–227 (WVYGDPRQVL…KIFEDFAQSW (174 aa)) the chain is on the extracellular side. N-linked (GlcNAc...) asparagine glycosylation is found at asparagine 67, asparagine 185, asparagine 195, and asparagine 196. Residues 228–248 (YWILVALGVALVLSLLFILLL) traverse the membrane as a helical segment. Topologically, residues 249–250 (RL) are cytoplasmic. A helical membrane pass occupies residues 251–271 (VAAPLVLLLIVGVLAVLAYGI). Topologically, residues 272–307 (YHCWQQYRELRDQGVSITQLGFTANLSAYQNVKETW) are extracellular. An N-linked (GlcNAc...) asparagine glycan is attached at asparagine 296. Residues 308 to 328 (LAALIILAVLEGVLLLMLIFL) traverse the membrane as a helical segment. Residues 329–356 (RQRIRIAIALLKEASRAVGQMMSTMFYP) lie on the Cytoplasmic side of the membrane. A helical membrane pass occupies residues 357–377 (LVTFVLLVICIGYWAVTALYL). At 378-452 (ATSGQPQYVY…GILGLFWTVN (75 aa)) the chain is on the extracellular side. N-linked (GlcNAc...) asparagine glycosylation is found at asparagine 391, asparagine 403, and asparagine 413. The helical transmembrane segment at 453–473 (WVLALGQCVLAGAFASFYWAF) threads the bilayer. Over 474-498 (HKPRDIPTFPLSSAFIRTLRYHTGS) the chain is Cytoplasmic. Residues 499–519 (LAFGALILTLVQIARVILEYI) traverse the membrane as a helical segment. Over 520 to 557 (DHKLRGSQNPVARCIICCFKCCLWCLEKFIKFLNRNAY) the chain is Extracellular. A helical transmembrane segment spans residues 558–578 (IMIAIYGKNFCVSAKNAFMLL). The Cytoplasmic segment spans residues 579 to 594 (MRNVVRVVVLDKVTDL). Residues 595 to 615 (LLFFGKLLVVGGVGVLSFFFF) form a helical membrane-spanning segment. The Extracellular segment spans residues 616–635 (SGRIKGLGKDFKNPDLNYYW). The chain crosses the membrane as a helical span at residues 636 to 656 (LPIMTSIMGAYVIASGFFSVF). Residues 657-707 (GMCVDTLFLCFLEDLERNDGSQERPYYMPKALLKILGKKNEVPTGGKNRKK) are Cytoplasmic-facing.

It belongs to the CTL (choline transporter-like) family. Post-translationally, N-glycosylated; N-glycosylation of Asn-67 and Asn-391 is required for a proper thiamine pyrophosphate uptake. As to expression, highly expressed in intestine, kidney and stomach. Also expressed in testis and lung.

It is found in the membrane. Its subcellular location is the apical cell membrane. It carries out the reaction choline(out) + n H(+)(in) = choline(in) + n H(+)(out). It catalyses the reaction thiamine diphosphate(out) = thiamine diphosphate(in). In terms of biological role, choline transporter that plays a role in the choline-acetylcholine system and is required to the efferent innervation of hair cells in the olivocochlear bundle for the maintenance of physiological function of outer hair cells and the protection of hair cells from acoustic injury. Also described as a thiamine pyrophosphate transporter in colon, may mediate the absorption of microbiota-generated thiamine pyrophosphate and contribute to host thiamine (vitamin B1) homeostasis. This Rattus norvegicus (Rat) protein is Choline transporter-like protein 4.